The chain runs to 572 residues: Fatty acid amide hydrolase 1 (572 aa).

The signal sequence occupies residues 1–14; that stretch reads MIFYLVLLVLGAIA. A coiled-coil region spans residues 32–63; that stretch reads IVAQRRRDDLSKNVEQARKAADKLDTQRRDWI. Residues Lys139 and Ser214 each act as charge relay system in the active site. Substrate is bound by residues Ser214 and 235–238; that span reads VGGS. Ser238 serves as the catalytic Acyl-ester intermediate.

The protein belongs to the amidase family. In terms of tissue distribution, expressed in the pharynx, some pharyngeal neurons, the posterior intestine and anal depressor muscles.

It carries out the reaction N-(5Z,8Z,11Z,14Z-eicosatetraenoyl)-ethanolamine + H2O = ethanolamine + (5Z,8Z,11Z,14Z)-eicosatetraenoate. The catalysed reaction is (9Z)-octadecenamide + H2O = (9Z)-octadecenoate + NH4(+). It catalyses the reaction (5Z,8Z,11Z,14Z,17Z-eicosapentaenoyl) ethanolamine + H2O = (5Z,8Z,11Z,14Z,17Z)-eicosapentaenoate + ethanolamine. The enzyme catalyses N-(9Z-hexadecenoyl) ethanolamine + H2O = (9Z)-hexadecenoate + ethanolamine. It carries out the reaction N-(9Z-octadecenoyl) ethanolamine + H2O = ethanolamine + (9Z)-octadecenoate. The catalysed reaction is N-octadecanoyl ethanolamine + H2O = octadecanoate + ethanolamine. It catalyses the reaction N-docosanoyl-ethanolamine + H2O = docosanoate + ethanolamine. The enzyme catalyses N-(15Z-tetracosenoyl)-ethanolamine + H2O = (15Z)-tetracosenoate + ethanolamine. It carries out the reaction N-hexadecanoylethanolamine + H2O = ethanolamine + hexadecanoate. The catalysed reaction is N-(9Z,12Z-octadecadienoyl)-ethanolamine + H2O = ethanolamine + (9Z,12Z)-octadecadienoate. It catalyses the reaction (9Z)-octadecenoate + glycine = N-(9Z-octadecenoyl)glycine + H2O. The enzyme catalyses N-(5Z,8Z,11Z,14Z)-eicosatetraenoyl-glycine + H2O = (5Z,8Z,11Z,14Z)-eicosatetraenoate + glycine. It carries out the reaction N-(5Z,8Z,11Z,14Z-eicosatetraenoyl)-L-serine + H2O = (5Z,8Z,11Z,14Z)-eicosatetraenoate + L-serine. Catalyzes the hydrolysis of endogenous amidated lipids like anandamide (AEA or N-(5Z,8Z,11Z,14Z-eicosatetraenoyl)-ethanolamine) and eicosapentaneoyl ethanolamide (EPEA or (5Z,8Z,11Z,14Z,17Z-eicosapentaenoyl) ethanolamine), as well as other fatty amides, to their corresponding fatty acids, thereby regulating the signaling functions of these molecules. EPEA promotes dauer formation and may constitute a signal of high nutrient availability. Breakdown of EPEA may promote lifespan extension when nutrient availability is high. Facilitates axon regeneration after injury by degradating inhibitory compounds such as AEA. FAAH cooperates with PM20D1 in the hydrolysis of amino acid-conjugated fatty acids such as N-fatty acyl glycine and N-fatty acyl-L-serine, thereby acting as a physiological regulator of specific subsets of intracellular, but not of extracellular, N-fatty acyl amino acids. In Caenorhabditis elegans, this protein is Fatty acid amide hydrolase 1.